We begin with the raw amino-acid sequence, 498 residues long: ATP synthase subunit beta, chloroplastic (498 aa).

An ATP-binding site is contributed by 172 to 179 (GGAGVGKT).

This sequence belongs to the ATPase alpha/beta chains family. F-type ATPases have 2 components, CF(1) - the catalytic core - and CF(0) - the membrane proton channel. CF(1) has five subunits: alpha(3), beta(3), gamma(1), delta(1), epsilon(1). CF(0) has four main subunits: a(1), b(1), b'(1) and c(9-12).

It is found in the plastid. The protein resides in the chloroplast thylakoid membrane. It carries out the reaction ATP + H2O + 4 H(+)(in) = ADP + phosphate + 5 H(+)(out). Produces ATP from ADP in the presence of a proton gradient across the membrane. The catalytic sites are hosted primarily by the beta subunits. The protein is ATP synthase subunit beta, chloroplastic of Lolium perenne (Perennial ryegrass).